A 132-amino-acid polypeptide reads, in one-letter code: Small ribosomal subunit protein uS11 (132 aa).

Positions 1–16 are enriched in basic residues; sequence MAAGMKGKRSRRRKER. Residues 1-20 are disordered; that stretch reads MAAGMKGKRSRRRKERKNVE.

Belongs to the universal ribosomal protein uS11 family. Part of the 30S ribosomal subunit. Interacts with proteins S7 and S18. Binds to IF-3.

Located on the platform of the 30S subunit, it bridges several disparate RNA helices of the 16S rRNA. Forms part of the Shine-Dalgarno cleft in the 70S ribosome. The sequence is that of Small ribosomal subunit protein uS11 from Clostridium botulinum (strain Hall / ATCC 3502 / NCTC 13319 / Type A).